The following is a 685-amino-acid chain: Probable glucan endo-1,3-beta-glucosidase btgC (685 aa).

Disordered regions lie at residues 1–96 (MSGP…NLGP), 119–168 (GIDA…RDSY), and 180–202 (PAGQ…SPYQ). Over 1-312 (MSGPHRSFSF…PTPGGGSRKR (312 aa)) the chain is Cytoplasmic. Composition is skewed to polar residues over residues 47–61 (SARS…SSGF) and 73–90 (GQNS…TTPG). A helical; Signal-anchor for type II membrane protein membrane pass occupies residues 313 to 333 (GWIVGLALAFIVVGAIVGGAV). Topologically, residues 334–685 (GGTLGNRENE…IPDCGGKTAA (352 aa)) are extracellular. The segment at 335 to 369 (GTLGNRENEAPDTTKSASSDTESNGDLNKDSSEIK) is disordered. A compositionally biased stretch (polar residues) spans 345-360 (PDTTKSASSDTESNGD). Residues asparagine 405, asparagine 428, and asparagine 456 are each glycosylated (N-linked (GlcNAc...) asparagine). Catalysis depends on glutamate 488, which acts as the Proton donor. Residue glutamate 587 is the Nucleophile of the active site. Residue asparagine 632 is glycosylated (N-linked (GlcNAc...) asparagine).

The protein belongs to the glycosyl hydrolase 17 family.

The protein localises to the cell membrane. The catalysed reaction is Hydrolysis of (1-&gt;3)-beta-D-glucosidic linkages in (1-&gt;3)-beta-D-glucans.. Glucanases play a role in cell expansion during growth, in cell-cell fusion during mating, and in spore release during sporulation. This enzyme may be involved in beta-glucan degradation. Active on laminarin and lichenan. The protein is Probable glucan endo-1,3-beta-glucosidase btgC (btgC) of Aspergillus oryzae (strain ATCC 42149 / RIB 40) (Yellow koji mold).